A 278-amino-acid chain; its full sequence is Putative phosphoenolpyruvate synthase regulatory protein (278 aa).

ADP is bound at residue 158-165 (GVSRSGKT).

The protein belongs to the pyruvate, phosphate/water dikinase regulatory protein family. PSRP subfamily.

The catalysed reaction is [pyruvate, water dikinase] + ADP = [pyruvate, water dikinase]-phosphate + AMP + H(+). It carries out the reaction [pyruvate, water dikinase]-phosphate + phosphate + H(+) = [pyruvate, water dikinase] + diphosphate. Functionally, bifunctional serine/threonine kinase and phosphorylase involved in the regulation of the phosphoenolpyruvate synthase (PEPS) by catalyzing its phosphorylation/dephosphorylation. The sequence is that of Putative phosphoenolpyruvate synthase regulatory protein from Acinetobacter baylyi (strain ATCC 33305 / BD413 / ADP1).